A 677-amino-acid chain; its full sequence is WD and tetratricopeptide repeats protein 1 (677 aa).

WD repeat units lie at residues 45-84 (GHSG…KLLS), 88-129 (GHTA…TIHM), 132-172 (DHTN…KHSE), 182-222 (GQLV…NHRK), and 265-305 (RLRV…RPYT). Ser353 carries the phosphoserine modification. TPR repeat units lie at residues 362–395 (LERV…APHN) and 397–432 (MLYG…NPCH). Residues 487–509 (NDGEEKKGPGGGAPVRLRSTSRK) form a disordered region. A Phosphoserine modification is found at Ser511. 2 WD repeats span residues 535 to 575 (NTTT…LVRV) and 578 to 617 (GDES…EDLT). Positions 655-677 (SSGGAGASDDEDSSEGQVQCRPS) are disordered.

Its pathway is protein modification; protein ubiquitination. Functionally, may function as a substrate receptor for CUL4-DDB1 E3 ubiquitin-protein ligase complex. The polypeptide is WD and tetratricopeptide repeats protein 1 (WDTC1) (Homo sapiens (Human)).